A 248-amino-acid polypeptide reads, in one-letter code: tRNA pseudouridine synthase A (248 aa).

The active-site Nucleophile is the D53. Y116 contributes to the substrate binding site.

It belongs to the tRNA pseudouridine synthase TruA family. Homodimer.

It carries out the reaction uridine(38/39/40) in tRNA = pseudouridine(38/39/40) in tRNA. In terms of biological role, formation of pseudouridine at positions 38, 39 and 40 in the anticodon stem and loop of transfer RNAs. This chain is tRNA pseudouridine synthase A, found in Helicobacter hepaticus (strain ATCC 51449 / 3B1).